Consider the following 40-residue polypeptide: Large ribosomal subunit protein bL36A (40 aa).

The protein belongs to the bacterial ribosomal protein bL36 family.

The polypeptide is Large ribosomal subunit protein bL36A (Renibacterium salmoninarum (strain ATCC 33209 / DSM 20767 / JCM 11484 / NBRC 15589 / NCIMB 2235)).